We begin with the raw amino-acid sequence, 239 residues long: Cell number regulator 6 (239 aa).

Over residues 1–10 (MAEDATSSHP) the composition is skewed to polar residues. A disordered region spans residues 1 to 33 (MAEDATSSHPSRYVKLTKDQDAPAEDIRPGELN). The span at 16 to 29 (LTKDQDAPAEDIRP) shows a compositional bias: basic and acidic residues. 2 helical membrane passes run 107–127 (CVCH…TAIF) and 136–156 (FLIG…TGIF).

The protein belongs to the cornifelin family. In terms of tissue distribution, expressed in roots, leaves, stalks, apical meristems, immature ears, endosperm, pericarp and tassel spikelets.

It is found in the membrane. The sequence is that of Cell number regulator 6 (CNR6) from Zea mays (Maize).